The sequence spans 670 residues: ATP synthase subunit alpha 2 (670 aa).

Residue 180–187 participates in ATP binding; the sequence is GDRATGKT. The disordered stretch occupies residues 527–670; it reads AEDAAGDIGG…DAEAEARHKR (144 aa). The segment covering 543–588 has biased composition (basic and acidic residues); it reads ARGDADRDADHGANREVSREVSPEASREVSREVSREVSHEADRDAA. A compositionally biased stretch (low complexity) spans 589-599; that stretch reads ADAARVAGRAP. Residues 621–639 are compositionally biased toward basic and acidic residues; the sequence is ADGDRASASRPRPDARGDA. Positions 640-661 are enriched in low complexity; that stretch reads ARTAPSPQGGAEVNVNAAANVD.

It belongs to the ATPase alpha/beta chains family. As to quaternary structure, F-type ATPases have 2 components, CF(1) - the catalytic core - and CF(0) - the membrane proton channel. CF(1) has five subunits: alpha(3), beta(3), gamma(1), delta(1), epsilon(1). CF(0) has three main subunits: a(1), b(2) and c(9-12). The alpha and beta chains form an alternating ring which encloses part of the gamma chain. CF(1) is attached to CF(0) by a central stalk formed by the gamma and epsilon chains, while a peripheral stalk is formed by the delta and b chains.

The protein localises to the cell inner membrane. The catalysed reaction is ATP + H2O + 4 H(+)(in) = ADP + phosphate + 5 H(+)(out). Functionally, produces ATP from ADP in the presence of a proton gradient across the membrane. The alpha chain is a regulatory subunit. This Burkholderia pseudomallei (strain 668) protein is ATP synthase subunit alpha 2.